Reading from the N-terminus, the 176-residue chain is NAD(P)H-quinone oxidoreductase subunit 6, chloroplastic (176 aa).

5 helical membrane passes run 10 to 30, 33 to 53, 61 to 81, 92 to 112, and 152 to 172; these read FLLV…ILFT, IFSA…YIIA, AQLL…VMFI, LFTL…FLLI, and FFPP…GAIA.

It belongs to the complex I subunit 6 family. As to quaternary structure, NDH is composed of at least 16 different subunits, 5 of which are encoded in the nucleus.

It is found in the plastid. It localises to the chloroplast thylakoid membrane. The enzyme catalyses a plastoquinone + NADH + (n+1) H(+)(in) = a plastoquinol + NAD(+) + n H(+)(out). It catalyses the reaction a plastoquinone + NADPH + (n+1) H(+)(in) = a plastoquinol + NADP(+) + n H(+)(out). Functionally, NDH shuttles electrons from NAD(P)H:plastoquinone, via FMN and iron-sulfur (Fe-S) centers, to quinones in the photosynthetic chain and possibly in a chloroplast respiratory chain. The immediate electron acceptor for the enzyme in this species is believed to be plastoquinone. Couples the redox reaction to proton translocation, and thus conserves the redox energy in a proton gradient. This is NAD(P)H-quinone oxidoreductase subunit 6, chloroplastic (ndhG) from Fagopyrum esculentum subsp. ancestrale (Wild buckwheat).